The chain runs to 232 residues: Phosphatidylserine decarboxylase proenzyme (232 aa).

Serine 190 (schiff-base intermediate with substrate; via pyruvic acid) is an active-site residue. A Pyruvic acid (Ser); by autocatalysis modification is found at serine 190.

Belongs to the phosphatidylserine decarboxylase family. PSD-A subfamily. In terms of assembly, heterodimer of a large membrane-associated beta subunit and a small pyruvoyl-containing alpha subunit. Pyruvate serves as cofactor. Post-translationally, is synthesized initially as an inactive proenzyme. Formation of the active enzyme involves a self-maturation process in which the active site pyruvoyl group is generated from an internal serine residue via an autocatalytic post-translational modification. Two non-identical subunits are generated from the proenzyme in this reaction, and the pyruvate is formed at the N-terminus of the alpha chain, which is derived from the carboxyl end of the proenzyme. The post-translation cleavage follows an unusual pathway, termed non-hydrolytic serinolysis, in which the side chain hydroxyl group of the serine supplies its oxygen atom to form the C-terminus of the beta chain, while the remainder of the serine residue undergoes an oxidative deamination to produce ammonia and the pyruvoyl prosthetic group on the alpha chain.

It is found in the cell membrane. It carries out the reaction a 1,2-diacyl-sn-glycero-3-phospho-L-serine + H(+) = a 1,2-diacyl-sn-glycero-3-phosphoethanolamine + CO2. Its pathway is phospholipid metabolism; phosphatidylethanolamine biosynthesis; phosphatidylethanolamine from CDP-diacylglycerol: step 2/2. In terms of biological role, catalyzes the formation of phosphatidylethanolamine (PtdEtn) from phosphatidylserine (PtdSer). This chain is Phosphatidylserine decarboxylase proenzyme, found in Agrobacterium fabrum (strain C58 / ATCC 33970) (Agrobacterium tumefaciens (strain C58)).